Consider the following 81-residue polypeptide: Photosystem I iron-sulfur center (81 aa).

2 consecutive 4Fe-4S ferredoxin-type domains span residues 1-31 (MSHSVKIYDTCIGCTQCVRACPLDVLEMVPW) and 39-68 (IASSPRTEDCIGCKRCETACPTDFLSIRVY). [4Fe-4S] cluster is bound by residues Cys11, Cys14, Cys17, Cys21, Cys48, Cys51, Cys54, and Cys58.

In terms of assembly, the cyanobacterial PSI reaction center is composed of one copy each of PsaA,B,C,D,E,F,I,J,K,L,M and X, and forms trimeric complexes. [4Fe-4S] cluster is required as a cofactor.

It localises to the cellular thylakoid membrane. The catalysed reaction is reduced [plastocyanin] + hnu + oxidized [2Fe-2S]-[ferredoxin] = oxidized [plastocyanin] + reduced [2Fe-2S]-[ferredoxin]. Apoprotein for the two 4Fe-4S centers FA and FB of photosystem I (PSI); essential for photochemical activity. FB is the terminal electron acceptor of PSI, donating electrons to ferredoxin. The C-terminus interacts with PsaA/B/D and helps assemble the protein into the PSI complex. Required for binding of PsaD and PsaE to PSI. PSI is a plastocyanin/cytochrome c6-ferredoxin oxidoreductase, converting photonic excitation into a charge separation, which transfers an electron from the donor P700 chlorophyll pair to the spectroscopically characterized acceptors A0, A1, FX, FA and FB in turn. In Microcystis aeruginosa (strain NIES-843 / IAM M-2473), this protein is Photosystem I iron-sulfur center.